Reading from the N-terminus, the 302-residue chain is S-crystallin SL4 (302 aa).

3 consecutive repeat copies span residues G45 to D54, G55 to D64, and G65 to D74. The segment at G45–D84 is 4 X approximate tandem repeats of G-G-Y-[AYP]-V-[QK]-[SG]-R-G-D. Short sequence motifs (cell attachment site) lie at residues R52 to D54, R62 to D64, and R72 to D74. The segment at P68–R92 is disordered. The 4; approximate repeat unit spans residues T75–D84. Positions R113–D115 match the Cell attachment site motif. The tract at residues S118–H205 is disordered. Composition is skewed to basic and acidic residues over residues R129–S166 and A177–I192. One can recognise a GST C-terminal domain in the interval G183–F302.

It belongs to the GST superfamily.

Functionally, S-crystallins are structural components of squids and octopi eye lens. In Nototodarus sloanii (Wellington flying squid), this protein is S-crystallin SL4.